The chain runs to 179 residues: DELTA-actitoxin-Afr1e (179 aa).

Residues 1 to 29 (SADVAGAVIDGAGLGFDVLKTVLEALGNV) form an N-terminal alpha-helix that contributes to the pore region. The N-terminal region stretch occupies residues 11 to 30 (GAGLGFDVLKTVLEALGNVK). Residue Arg-31 participates in an N-(acyl)-sphingosylphosphocholine binding. Residues Tyr-51 and Arg-53 each coordinate N-acetyl-D-glucosamine 6-sulfate. An N-(acyl)-sphingosylphosphocholine-binding residues include Arg-53, Ser-54, Arg-79, Gly-85, Tyr-108, Tyr-113, Ser-114, Trp-116, Tyr-133, Tyr-137, Tyr-138, Arg-144, and Gly-168. The interval 105–120 (SVPYDYNWYSNWWNVR) is trp-rich region, which is important for the binding to lipid membrane. An N-acetyl-D-glucosamine 6-sulfate-binding site is contributed by Tyr-138. The Cell attachment site, crucial for protein stability signature appears at 144–146 (RGD).

This sequence belongs to the actinoporin family. Sea anemone subfamily. In terms of assembly, octamer or nonamer in membranes. Monomer in the soluble state.

Its subcellular location is the secreted. It localises to the nematocyst. The protein localises to the target cell membrane. In terms of biological role, pore-forming toxin (PFT) that consists of a crown-shaped octamer or nonamer that forms cation-selective hydrophilic pores of about 1.5 nm (inside) and 13 nm (outside) and causes cytolysis. It causes cardiac stimulation. Also causes hemolysis (HC(50)=1.6 nM). Interestingly, the Phe-16 is crucial for hemolysis. Pore formation is a multi-step process that involves specific recognition of membrane sphingomyelin (but neither cholesterol nor phosphatidylcholine) using aromatic rich region and adjacent phosphocholine (POC) binding site, firm binding to the membrane (mainly driven by hydrophobic interactions) accompanied by the transfer of the N-terminal region to the lipid-water interface and finally pore formation after oligomerization of monomers. It is probable that a dimeric form is an assembly intermediate before the complete oligomerization. The formation of stable pores occurs only in vesicles composed of DOPC/SM (there is no oligomerization when the PFT is treated with vesicles of DOPC or SM alone). The transmembrane pore displays 8 lateral perforations, one at each subunit-subunit interface, partially occupied by the acyl-chain region of a bridging lipid. Each pore contains 24 lipid molecules, firmly bound to each subunit, that is, 3 lipids (L1, L2, L3, L4 and/or L5) are associated to each subunit. Lipid L1 bridges 2 subunits, whereas lipids L2 and L3 bind to sites at single subunit. The polypeptide is DELTA-actitoxin-Afr1e (Actinia fragacea (Strawberry anemone)).